Consider the following 127-residue polypeptide: Glycine cleavage system H protein (127 aa).

The 82-residue stretch at 23-104 (TALVGLTDYA…PYEAWFAKIT (82 aa)) folds into the Lipoyl-binding domain. Residue K64 is modified to N6-lipoyllysine.

The protein belongs to the GcvH family. The glycine cleavage system is composed of four proteins: P, T, L and H. The cofactor is (R)-lipoate.

Functionally, the glycine cleavage system catalyzes the degradation of glycine. The H protein shuttles the methylamine group of glycine from the P protein to the T protein. This Lachnoclostridium phytofermentans (strain ATCC 700394 / DSM 18823 / ISDg) (Clostridium phytofermentans) protein is Glycine cleavage system H protein.